The sequence spans 329 residues: uncharacterized protein (329 aa).

The N-terminal stretch at 1-32 (MSQDRGPRRPRRLEKCALISASATVLSLTASG) is a signal peptide. A lipid anchor (N-palmitoyl cysteine) is attached at Cys-33. Cys-33 carries S-diacylglycerol cysteine lipidation.

Its subcellular location is the cell membrane. This is an uncharacterized protein from Streptomyces coelicolor (strain ATCC BAA-471 / A3(2) / M145).